A 428-amino-acid chain; its full sequence is FAD-dependent monooxygenase kojA (428 aa).

FAD contacts are provided by residues arginine 52–proline 60 and serine 328–valine 329.

Belongs to the aromatic-ring hydroxylase family. Requires FAD as cofactor.

Its function is as follows. Probable FAD-dependent monooxygenase; part of the gene cluster that mediates the biosynthesis of 5-hydroxy-2-hydroxymethyl-1,4-pyrone, also know as kojic acid, a by-product in the fermentation process of malting rice that acts as a chelation agent. Glucose might be converted to kojic acid by a combination of dehydrogenase and dehydratase reactions involving kojA and probably additional enzymes. This Aspergillus flavus (strain ATCC 200026 / FGSC A1120 / IAM 13836 / NRRL 3357 / JCM 12722 / SRRC 167) protein is FAD-dependent monooxygenase kojA.